We begin with the raw amino-acid sequence, 108 residues long: L-rhamnose mutarotase (108 aa).

Y18 contacts substrate. The active-site Proton donor is the H22. Substrate-binding positions include Y41 and 76-77 (WW).

The protein belongs to the rhamnose mutarotase family. Homodimer.

It is found in the cytoplasm. The enzyme catalyses alpha-L-rhamnose = beta-L-rhamnose. It participates in carbohydrate metabolism; L-rhamnose metabolism. Involved in the anomeric conversion of L-rhamnose. The sequence is that of L-rhamnose mutarotase from Paraburkholderia phymatum (strain DSM 17167 / CIP 108236 / LMG 21445 / STM815) (Burkholderia phymatum).